Reading from the N-terminus, the 449-residue chain is MELETHLSKYFTLAFTHKSMSLEMREKLAINSPIMLKELLQTIKTHCPNIKECMVLSTCNRFEIYASLKHGANTHEQKSALLKILAQNKKMSVSDLEKCVLINTDESAVHHVFSVCSSLDSLVVGETQITGQMKNAYKFAFEEKFCSKDLTRLLHFAFKCAAKVRNLTGISKQGVSISSVAVKEALSIFEKERIKDKKALVIGLGEMAQLVIKHLLNKQFEVLILGRNAAKFEDFVKELEEPKKVGFQNVENLNAYINEYELLFCATSSPNFIVRNSMLKETIFRRFWFDLAVPRNIEKPTLNHIFLYSVDDLEPMVKENVGNRQESRTKAYEIVGLATMEFYQWIQSLEVEPLIKDLRELARISAQKELQKALKKRYVPKEYEGNIEKILHNAFNTFLHHPTIALKKNAQKEESDVLVGAIKNLFNLDKSNANHAQNLNLYKCEYYEE.

Substrate contacts are provided by residues 58-61, Ser-121, 126-128, and Gln-132; these read TCNR and ETQ. Cys-59 serves as the catalytic Nucleophile. 203 to 208 contacts NADP(+); that stretch reads GLGEMA.

Belongs to the glutamyl-tRNA reductase family. In terms of assembly, homodimer.

The catalysed reaction is (S)-4-amino-5-oxopentanoate + tRNA(Glu) + NADP(+) = L-glutamyl-tRNA(Glu) + NADPH + H(+). It functions in the pathway porphyrin-containing compound metabolism; protoporphyrin-IX biosynthesis; 5-aminolevulinate from L-glutamyl-tRNA(Glu): step 1/2. Functionally, catalyzes the NADPH-dependent reduction of glutamyl-tRNA(Glu) to glutamate 1-semialdehyde (GSA). This chain is Glutamyl-tRNA reductase, found in Helicobacter pylori (strain J99 / ATCC 700824) (Campylobacter pylori J99).